The sequence spans 311 residues: Acetyl-coenzyme A carboxylase carboxyl transferase subunit alpha (311 aa).

A CoA carboxyltransferase C-terminal domain is found at 36–286; it reads NLEKETQKVY…SDYVLKAIEE (251 aa).

Belongs to the AccA family. As to quaternary structure, acetyl-CoA carboxylase is a heterohexamer composed of biotin carboxyl carrier protein (AccB), biotin carboxylase (AccC) and two subunits each of ACCase subunit alpha (AccA) and ACCase subunit beta (AccD).

The protein localises to the cytoplasm. It catalyses the reaction N(6)-carboxybiotinyl-L-lysyl-[protein] + acetyl-CoA = N(6)-biotinyl-L-lysyl-[protein] + malonyl-CoA. Its pathway is lipid metabolism; malonyl-CoA biosynthesis; malonyl-CoA from acetyl-CoA: step 1/1. Its function is as follows. Component of the acetyl coenzyme A carboxylase (ACC) complex. First, biotin carboxylase catalyzes the carboxylation of biotin on its carrier protein (BCCP) and then the CO(2) group is transferred by the carboxyltransferase to acetyl-CoA to form malonyl-CoA. The chain is Acetyl-coenzyme A carboxylase carboxyl transferase subunit alpha from Campylobacter lari (strain RM2100 / D67 / ATCC BAA-1060).